We begin with the raw amino-acid sequence, 506 residues long: RNA-splicing ligase RtcB homolog (506 aa).

Mn(2+) contacts are provided by aspartate 120, cysteine 123, histidine 228, histidine 260, and histidine 354. 227 to 231 serves as a coordination point for GMP; that stretch reads NHYAE. Residues 354-355, 403-406, serine 410, 429-432, and lysine 505 contribute to the GMP site; these read HN, GGSM, and HGAG. Histidine 429 functions as the GMP-histidine intermediate in the catalytic mechanism.

Belongs to the RtcB family. In terms of assembly, catalytic component of the tRNA-splicing ligase complex. Mn(2+) serves as cofactor.

It carries out the reaction a 3'-end 3'-phospho-ribonucleotide-RNA + a 5'-end dephospho-ribonucleoside-RNA + GTP = a ribonucleotidyl-ribonucleotide-RNA + GMP + diphosphate. The enzyme catalyses a 3'-end 2',3'-cyclophospho-ribonucleotide-RNA + a 5'-end dephospho-ribonucleoside-RNA + GTP + H2O = a ribonucleotidyl-ribonucleotide-RNA + GMP + diphosphate + H(+). Catalytic subunit of the tRNA-splicing ligase complex that acts by directly joining spliced tRNA halves to mature-sized tRNAs by incorporating the precursor-derived splice junction phosphate into the mature tRNA as a canonical 3',5'-phosphodiester. May act as an RNA ligase with broad substrate specificity, and may function toward other RNAs. This Aedes aegypti (Yellowfever mosquito) protein is RNA-splicing ligase RtcB homolog.